The sequence spans 160 residues: Large ribosomal subunit protein uL15 (160 aa).

Over residues 1-14 (MKLNDISDNPGSSK) the composition is skewed to polar residues. The interval 1–35 (MKLNDISDNPGSSKSRMRVGRGIGSGKGKTCGRGV) is disordered. Positions 21-35 (RGIGSGKGKTCGRGV) are enriched in gly residues.

This sequence belongs to the universal ribosomal protein uL15 family. Part of the 50S ribosomal subunit.

Functionally, binds to the 23S rRNA. The chain is Large ribosomal subunit protein uL15 from Beijerinckia indica subsp. indica (strain ATCC 9039 / DSM 1715 / NCIMB 8712).